We begin with the raw amino-acid sequence, 753 residues long: Putative cyclic nucleotide-gated ion channel 8 (753 aa).

The Cytoplasmic portion of the chain corresponds to 1-111 (MYKSQYISGH…DKTLLLWNRM (111 aa)). A helical transmembrane segment spans residues 112 to 132 (FVISCILAVSVDPLFFYLPIV). Residues 133–145 (DNSKNCIGIDSKL) lie on the Extracellular side of the membrane. Residues 146 to 166 (AVTTTTLRTIIDVFYLTRMAL) traverse the membrane as a helical segment. Residues 167–199 (QFRTAYIAPSSRVFGRGELVIDPAKIAERYLTR) lie on the Cytoplasmic side of the membrane. Residues 200–220 (YFIVDFLAVLPLPQIAVWKFL) traverse the membrane as a helical segment. Residues 221 to 233 (HGSKGTDVLPTKQ) lie on the Extracellular side of the membrane. Residues 234–254 (ALLHIVITQYIPRFVRFIPLT) traverse the membrane as a helical segment. At 255–274 (SELKKTAGAFAEGAWAGAAY) the chain is on the cytoplasmic side. The chain crosses the membrane as a helical span at residues 275-295 (YLLWYMLASHITGAFWYMLSV). Topologically, residues 296–402 (ERNDTCLRSA…QGLQTSTYPG (107 aa)) are extracellular. A helical transmembrane segment spans residues 403-423 (EVLFSIAIAVAGLLLFALLIG). The Cytoplasmic portion of the chain corresponds to 424–753 (NMQTYLQSLT…FEALDTDDLN (330 aa)). Residues 508-638 (LFAN…TFRF) and Glu579 each bind a nucleoside 3',5'-cyclic phosphate. The interval 624 to 639 (FRRLHSRQVQQTFRFY) is calmodulin-binding. Positions 644–673 (RTWAACFIQAAWRRHLRRKIAELRRKEEEE) constitute an IQ domain. Positions 731 to 753 (KSLMNLTKPSEPDFEALDTDDLN) are disordered. Positions 742–753 (PDFEALDTDDLN) are enriched in acidic residues.

The protein belongs to the cyclic nucleotide-gated cation channel (TC 1.A.1.5) family. As to quaternary structure, homotetramer or heterotetramer.

The protein resides in the cell membrane. Putative cyclic nucleotide-gated ion channel. This is Putative cyclic nucleotide-gated ion channel 8 (CNGC8) from Arabidopsis thaliana (Mouse-ear cress).